A 229-amino-acid polypeptide reads, in one-letter code: Uracil-DNA glycosylase (229 aa).

The active-site Proton acceptor is the D64.

Belongs to the uracil-DNA glycosylase (UDG) superfamily. UNG family.

The protein localises to the cytoplasm. It carries out the reaction Hydrolyzes single-stranded DNA or mismatched double-stranded DNA and polynucleotides, releasing free uracil.. Functionally, excises uracil residues from the DNA which can arise as a result of misincorporation of dUMP residues by DNA polymerase or due to deamination of cytosine. The chain is Uracil-DNA glycosylase from Escherichia coli O45:K1 (strain S88 / ExPEC).